Consider the following 299-residue polypeptide: 4-diphosphocytidyl-2-C-methyl-D-erythritol kinase (299 aa).

Residue Lys10 is part of the active site. 96–106 (PVAGGMAGGSA) is an ATP binding site. Asp138 is an active-site residue.

This sequence belongs to the GHMP kinase family. IspE subfamily.

It carries out the reaction 4-CDP-2-C-methyl-D-erythritol + ATP = 4-CDP-2-C-methyl-D-erythritol 2-phosphate + ADP + H(+). It participates in isoprenoid biosynthesis; isopentenyl diphosphate biosynthesis via DXP pathway; isopentenyl diphosphate from 1-deoxy-D-xylulose 5-phosphate: step 3/6. Catalyzes the phosphorylation of the position 2 hydroxy group of 4-diphosphocytidyl-2C-methyl-D-erythritol. In Streptomyces coelicolor (strain ATCC BAA-471 / A3(2) / M145), this protein is 4-diphosphocytidyl-2-C-methyl-D-erythritol kinase.